Here is a 572-residue protein sequence, read N- to C-terminus: 2-succinyl-5-enolpyruvyl-6-hydroxy-3-cyclohexene-1-carboxylate synthase (572 aa).

Belongs to the TPP enzyme family. MenD subfamily. In terms of assembly, homodimer. Mg(2+) serves as cofactor. Mn(2+) is required as a cofactor. Requires thiamine diphosphate as cofactor.

It catalyses the reaction isochorismate + 2-oxoglutarate + H(+) = 5-enolpyruvoyl-6-hydroxy-2-succinyl-cyclohex-3-ene-1-carboxylate + CO2. It functions in the pathway quinol/quinone metabolism; 1,4-dihydroxy-2-naphthoate biosynthesis; 1,4-dihydroxy-2-naphthoate from chorismate: step 2/7. The protein operates within quinol/quinone metabolism; menaquinone biosynthesis. Catalyzes the thiamine diphosphate-dependent decarboxylation of 2-oxoglutarate and the subsequent addition of the resulting succinic semialdehyde-thiamine pyrophosphate anion to isochorismate to yield 2-succinyl-5-enolpyruvyl-6-hydroxy-3-cyclohexene-1-carboxylate (SEPHCHC). In Vibrio campbellii (strain ATCC BAA-1116), this protein is 2-succinyl-5-enolpyruvyl-6-hydroxy-3-cyclohexene-1-carboxylate synthase.